The primary structure comprises 368 residues: Guanylate binding protein 128up (368 aa).

Lys-22 bears the (3S)-3-hydroxylysine mark. The OBG-type G domain occupies 65–290 (ARVGFVGFPS…LLELMWEYLR (226 aa)). Residues 71-78 (GFPSVGKS), 117-121 (DLPGI), and 248-251 (NKID) contribute to the GTP site. Residues 290 to 366 (RLQRIYTKPK…NDEDVVQIVK (77 aa)) form the TGS domain.

The protein belongs to the TRAFAC class OBG-HflX-like GTPase superfamily. OBG GTPase family. Post-translationally, hydroxylated (with S stereochemistry) at C-3 of Lys-22 by JMJD7. In terms of tissue distribution, expressed in posterior-lateral epidermis of the maxillary lobe.

Its function is as follows. Catalyzes the conversion of GTP to GDP through hydrolysis of the gamma-phosphate bond in GTP. Dfd/deformed is required to activate 128up in maxillary segment cells. The sequence is that of Guanylate binding protein 128up from Drosophila melanogaster (Fruit fly).